Here is a 419-residue protein sequence, read N- to C-terminus: Endochitinase 2 (419 aa).

The first 18 residues, 1–18 (MHHLRALVGVGLAGLAAG), serve as a signal peptide directing secretion. In terms of domain architecture, GH18 spans 35–343 (AQNVVYWGQN…QQAKSILVNG (309 aa)). A glycan (N-linked (GlcNAc...) asparagine) is linked at Asn-153. The active-site Proton donor is Glu-173. N-linked (GlcNAc...) asparagine glycosylation is found at Asn-237 and Asn-256. Positions 343 to 390 (GAPCPSSGPPSSTPATAPAPTATTMPSSTSVSSPTASPTGGTVPQWGQ) are disordered. The segment covering 355–384 (TPATAPAPTATTMPSSTSVSSPTASPTGGT) has biased composition (low complexity). The region spanning 383–419 (GTVPQWGQCGGEGYSGPTQCVPPYQCVKQGDWWSSCR) is the CBM1 domain.

It belongs to the glycosyl hydrolase 18 family. Chitinase class III subfamily.

The protein localises to the secreted. The catalysed reaction is Random endo-hydrolysis of N-acetyl-beta-D-glucosaminide (1-&gt;4)-beta-linkages in chitin and chitodextrins.. Its function is as follows. Secreted chitinase involved in the degradation of chitin, a component of the cell walls of fungi and exoskeletal elements of some animals (including worms and arthropods). Participates in the infection process and directly acts in the penetration process of the host cuticle. The polypeptide is Endochitinase 2 (chi2) (Metarhizium anisopliae (Entomophthora anisopliae)).